Consider the following 487-residue polypeptide: UDP-N-acetylmuramoyl-L-alanyl-D-glutamate--2,6-diaminopimelate ligase (487 aa).

Residues leucine 23 and serine 25 each coordinate UDP-N-acetyl-alpha-D-muramoyl-L-alanyl-D-glutamate. Position 108–114 (108–114 (GTNGKTS)) interacts with ATP. UDP-N-acetyl-alpha-D-muramoyl-L-alanyl-D-glutamate is bound by residues 150–151 (TT), serine 177, glutamine 183, and arginine 185. Lysine 217 carries the N6-carboxylysine modification. Residues arginine 378, 402-405 (DNPR), glycine 453, and glutamate 457 each bind meso-2,6-diaminopimelate. The short motif at 402–405 (DNPR) is the Meso-diaminopimelate recognition motif element.

Belongs to the MurCDEF family. MurE subfamily. Mg(2+) serves as cofactor. In terms of processing, carboxylation is probably crucial for Mg(2+) binding and, consequently, for the gamma-phosphate positioning of ATP.

The protein resides in the cytoplasm. The enzyme catalyses UDP-N-acetyl-alpha-D-muramoyl-L-alanyl-D-glutamate + meso-2,6-diaminopimelate + ATP = UDP-N-acetyl-alpha-D-muramoyl-L-alanyl-gamma-D-glutamyl-meso-2,6-diaminopimelate + ADP + phosphate + H(+). It functions in the pathway cell wall biogenesis; peptidoglycan biosynthesis. Functionally, catalyzes the addition of meso-diaminopimelic acid to the nucleotide precursor UDP-N-acetylmuramoyl-L-alanyl-D-glutamate (UMAG) in the biosynthesis of bacterial cell-wall peptidoglycan. The polypeptide is UDP-N-acetylmuramoyl-L-alanyl-D-glutamate--2,6-diaminopimelate ligase (Ectopseudomonas mendocina (strain ymp) (Pseudomonas mendocina)).